We begin with the raw amino-acid sequence, 58 residues long: Large ribosomal subunit protein uL30 (58 aa).

This sequence belongs to the universal ribosomal protein uL30 family. In terms of assembly, part of the 50S ribosomal subunit.

In Novosphingobium aromaticivorans (strain ATCC 700278 / DSM 12444 / CCUG 56034 / CIP 105152 / NBRC 16084 / F199), this protein is Large ribosomal subunit protein uL30.